The sequence spans 294 residues: Zinc finger protein CONSTANS-LIKE 3 (294 aa).

The Zn(2+) site is built by Cys8, Cys11, Cys31, His36, Cys51, Cys54, Cys74, and His79. The segment at 8 to 50 adopts a B box-type 1; atypical zinc-finger fold; that stretch reads CDSCKSTAATLFCRADAAFLCGDCDGKIHTANKLASRHERVWL. Residues 51–93 form a B box-type 2; atypical zinc finger; the sequence is CEVCEQAPAHVTCKADAAALCVTCDRDIHSANPLSRRHERVPI. Positions 229-271 constitute a CCT domain; the sequence is REARVLRYREKRKNRKFEKTIRYASRKAYAEMRPRIKGRFAKR.

The protein belongs to the CONSTANS family.

It localises to the nucleus. This is Zinc finger protein CONSTANS-LIKE 3 (COL3) from Arabidopsis thaliana (Mouse-ear cress).